Here is a 407-residue protein sequence, read N- to C-terminus: Mitochondrial protein import protein mas5 (407 aa).

The J domain occupies 6-68 (KLYEVLNVDV…EKRATYDRFG (63 aa)). Substrate-binding positions include L110 and 129-131 (LAL). The CR-type zinc finger occupies 124–207 (GKTTKLALQK…CDGAKVISQR (84 aa)). Residues C137, C140, C153, C156, C179, C182, C195, and C198 each contribute to the Zn(2+) site. CXXCXGXG motif repeat units lie at residues 137 to 144 (CPKCSGRG), 153 to 160 (CASCNGSG), 179 to 186 (CPDCNGAG), and 195 to 202 (CKECDGAK). Substrate contacts are provided by residues 209–210 (IL) and 241–243 (VIF). The interval 375-407 (VRIDNNVDPTTATSMDEDEDEEGGHPGVQCAQQ) is disordered. The residue at position 404 (C404) is a Cysteine methyl ester. C404 carries the S-farnesyl cysteine lipid modification. Positions 405-407 (AQQ) are cleaved as a propeptide — removed in mature form.

In terms of assembly, homodimer.

It localises to the cytoplasm. Its subcellular location is the nucleus. Probably involved in mitochondrial protein import. Plays a role in microtubule cytoskeleton organization. In Schizosaccharomyces pombe (strain 972 / ATCC 24843) (Fission yeast), this protein is Mitochondrial protein import protein mas5 (mas5).